A 607-amino-acid polypeptide reads, in one-letter code: Glutamyl-tRNA(Gln) amidotransferase subunit E (607 aa).

The disordered stretch occupies residues 399 to 428 (GVPEETRGANPDGTTRFLRPRPGAARMYPE).

This sequence belongs to the GatB/GatE family. GatE subfamily. Heterodimer of GatD and GatE.

The enzyme catalyses L-glutamyl-tRNA(Gln) + L-glutamine + ATP + H2O = L-glutaminyl-tRNA(Gln) + L-glutamate + ADP + phosphate + H(+). Functionally, allows the formation of correctly charged Gln-tRNA(Gln) through the transamidation of misacylated Glu-tRNA(Gln) in organisms which lack glutaminyl-tRNA synthetase. The reaction takes place in the presence of glutamine and ATP through an activated gamma-phospho-Glu-tRNA(Gln). The GatDE system is specific for glutamate and does not act on aspartate. In Pyrobaculum neutrophilum (strain DSM 2338 / JCM 9278 / NBRC 100436 / V24Sta) (Thermoproteus neutrophilus), this protein is Glutamyl-tRNA(Gln) amidotransferase subunit E.